Here is a 602-residue protein sequence, read N- to C-terminus: T-box transcription factor TBX15 (602 aa).

The segment at 43–95 (SMEALSPAGPLGDTDDPATHGLEPHPDSEQSTGSDSEVLTERTSCSFSTHTDL) is disordered. Positions 71-94 (EQSTGSDSEVLTERTSCSFSTHTD) are enriched in polar residues. Residues 122–304 (LWKRFHDIGT…RNPFAKGFRD (183 aa)) constitute a DNA-binding region (T-box). Thr-330 is modified (phosphothreonine). Disordered stretches follow at residues 338-369 (QKQQ…LSPS) and 425-444 (QSGT…QRTP). Residues 346–369 (GTSPTTSSTGTPSPSASSHLLSPS) show a composition bias toward low complexity.

As to quaternary structure, can form a heterodimer with TBX18.

It is found in the nucleus. Probable transcriptional regulator involved in the development of the skeleton of the limb, vertebral column and head. Acts by controlling the number of mesenchymal precursor cells and chondrocytes. This is T-box transcription factor TBX15 (Tbx15) from Mus musculus (Mouse).